Here is a 353-residue protein sequence, read N- to C-terminus: Rhodopsin (353 aa).

Over 1 to 36 the chain is Extracellular; that stretch reads MNGTEGPYFYVPMVNTSGIVRSPYEYPQYYLVNPAA. N-linked (GlcNAc...) asparagine glycans are attached at residues Asn2 and Asn15. A helical membrane pass occupies residues 37 to 61; it reads YAALGAYMFLLILVGFPINFLTLYV. Residues 62 to 73 lie on the Cytoplasmic side of the membrane; it reads TIEHKKLRTPLN. A helical membrane pass occupies residues 74–96; the sequence is YILLNLAVADLFMVFGGFTTTMY. Over 97 to 110 the chain is Extracellular; it reads TSMHGYFVLGRLGC. Residues Cys110 and Cys187 are joined by a disulfide bond. Residues 111–133 form a helical membrane-spanning segment; that stretch reads NIEGFFATLGGEIALWSLVVLAI. Positions 134–136 match the 'Ionic lock' involved in activated form stabilization motif; sequence ERW. The Cytoplasmic portion of the chain corresponds to 134–152; that stretch reads ERWVVVCKPISNFRFGENH. The chain crosses the membrane as a helical span at residues 153-173; that stretch reads AIMGLAFTWLMALACAAPPLV. The Extracellular portion of the chain corresponds to 174–202; it reads GWSRYIPEGMQCSCGIDYYTRAEGFNNES. A glycan (N-linked (GlcNAc...) asparagine) is linked at Asn200. Residues 203-224 form a helical membrane-spanning segment; that stretch reads FVIYMFICHFSIPLLVVFFCYG. Residues 225-252 lie on the Cytoplasmic side of the membrane; sequence RLLCAVKEAAAAQQESETTQRAEREVTR. A helical transmembrane segment spans residues 253 to 274; the sequence is MVIMMVIAFLVCWLPYASVAWW. The Extracellular segment spans residues 275–286; it reads IFTHQGSDFGPV. Residues 287–308 traverse the membrane as a helical segment; it reads FMTIPAFFAKSSSIYNPMIYIC. At Lys296 the chain carries N6-(retinylidene)lysine. Residues 309–353 lie on the Cytoplasmic side of the membrane; the sequence is LNKQFRHCMITTLCCGKNPFEEEEGASTASKTEASSVSSSSVSPA. Residues Cys322 and Cys323 are each lipidated (S-palmitoyl cysteine). The segment at 331 to 353 is disordered; sequence EEGASTASKTEASSVSSSSVSPA. The span at 334-353 shows a compositional bias: low complexity; the sequence is ASTASKTEASSVSSSSVSPA.

Belongs to the G-protein coupled receptor 1 family. Opsin subfamily. Phosphorylated on some or all of the serine and threonine residues present in the C-terminal region. Post-translationally, contains one covalently linked retinal chromophore.

Its subcellular location is the membrane. The protein resides in the cell projection. It localises to the cilium. It is found in the photoreceptor outer segment. In terms of biological role, photoreceptor required for image-forming vision at low light intensity. While most salt water fish species use retinal as chromophore, most freshwater fish use 3-dehydroretinal, or a mixture of retinal and 3-dehydroretinal. Light-induced isomerization of 11-cis to all-trans retinal triggers a conformational change that activates signaling via G-proteins. Subsequent receptor phosphorylation mediates displacement of the bound G-protein alpha subunit by arrestin and terminates signaling. In Diplodus vulgaris (Common two-banded seabream), this protein is Rhodopsin (rho).